The chain runs to 330 residues: Aspartate--ammonia ligase (330 aa).

This sequence belongs to the class-II aminoacyl-tRNA synthetase family. AsnA subfamily.

It is found in the cytoplasm. The enzyme catalyses L-aspartate + NH4(+) + ATP = L-asparagine + AMP + diphosphate + H(+). The protein operates within amino-acid biosynthesis; L-asparagine biosynthesis; L-asparagine from L-aspartate (ammonia route): step 1/1. The polypeptide is Aspartate--ammonia ligase (Klebsiella pneumoniae subsp. pneumoniae (strain ATCC 700721 / MGH 78578)).